The primary structure comprises 142 residues: FAD synthase (142 aa).

Residues 9-10, 14-17, D93, and Y120 each bind ATP; these read VF and HLGH.

This sequence belongs to the archaeal FAD synthase family. Homodimer. A divalent metal cation is required as a cofactor.

It catalyses the reaction FMN + ATP + H(+) = FAD + diphosphate. The protein operates within cofactor biosynthesis; FAD biosynthesis; FAD from FMN: step 1/1. In terms of biological role, catalyzes the transfer of the AMP portion of ATP to flavin mononucleotide (FMN) to produce flavin adenine dinucleotide (FAD) coenzyme. This chain is FAD synthase (ribL), found in Thermoplasma volcanium (strain ATCC 51530 / DSM 4299 / JCM 9571 / NBRC 15438 / GSS1).